The chain runs to 263 residues: Mediator of RNA polymerase II transcription subunit 4 (263 aa).

A coiled-coil region spans residues Leu-61–Gln-111. Disordered stretches follow at residues Ala-209–Gly-228 and Asp-235–Gln-263. A compositionally biased stretch (low complexity) spans Ser-251–Gln-263.

Belongs to the Mediator complex subunit 4 family. In terms of assembly, component of the Mediator complex.

It localises to the nucleus. Functionally, component of the Mediator complex, a coactivator involved in the regulated transcription of nearly all RNA polymerase II-dependent genes. Mediator functions as a bridge to convey information from gene-specific regulatory proteins to the basal RNA polymerase II transcription machinery. Mediator is recruited to promoters by direct interactions with regulatory proteins and serves as a scaffold for the assembly of a functional preinitiation complex with RNA polymerase II and the general transcription factors. This is Mediator of RNA polymerase II transcription subunit 4 (MED4) from Anopheles gambiae (African malaria mosquito).